The following is a 954-amino-acid chain: Alpha-xylosidase BoGH31A (954 aa).

The N-terminal stretch at 1–20 (MIMNMKNIFYCLLPGLLLGA) is a signal peptide. C21 carries the N-palmitoyl cysteine lipid modification. C21 carries S-diacylglycerol cysteine lipidation. Residues 227–366 (TGQEGALTGT…NPEEQGKQSW (140 aa)) form the PA14 domain. Residues D553 and E556 contribute to the active site. The Proton donor role is filled by D630.

The protein belongs to the glycosyl hydrolase 31 family.

It localises to the cell inner membrane. The enzyme catalyses Hydrolysis of terminal, non-reducing alpha-D-xylose residues with release of alpha-D-xylose.. It functions in the pathway glucan metabolism; xyloglucan degradation. Its function is as follows. Catalyzes the liberation of alpha-xylose from the non-reducing terminal glucose of xyloglucan oligosaccharides in xyloglucan degradation, converting the 'X' to 'G' units. This is Alpha-xylosidase BoGH31A from Bacteroides ovatus (strain ATCC 8483 / DSM 1896 / JCM 5824 / BCRC 10623 / CCUG 4943 / NCTC 11153).